A 365-amino-acid chain; its full sequence is uncharacterized protein (365 aa).

Residue 29–36 (GPLNSGKS) coordinates ATP.

The protein belongs to the archaeal ATPase family.

This is an uncharacterized protein from Methanocaldococcus jannaschii (strain ATCC 43067 / DSM 2661 / JAL-1 / JCM 10045 / NBRC 100440) (Methanococcus jannaschii).